Here is a 67-residue protein sequence, read N- to C-terminus: MAAKKGAKTSTKKSDYYKVEGNTVERLKKVCPKCGAGVFMAEHLNRFACGKCGYMEYKKNEKTESEE.

Residues Cys31, Cys34, Cys49, and Cys52 each contribute to the Zn(2+) site. The segment at 31–52 (CPKCGAGVFMAEHLNRFACGKC) adopts a C4-type zinc-finger fold.

This sequence belongs to the eukaryotic ribosomal protein eS31 family. In terms of assembly, part of the 30S ribosomal subunit. Zn(2+) serves as cofactor.

The polypeptide is Small ribosomal subunit protein eS31 (Methanococcus maripaludis (strain DSM 14266 / JCM 13030 / NBRC 101832 / S2 / LL)).